A 1357-amino-acid polypeptide reads, in one-letter code: Major yolk protein (1357 aa).

Residues 1 to 15 form the signal peptide; the sequence is MRAAILFCLVASSMA. Transferrin-like domains lie at 132 to 478 and 493 to 1101; these read VRWC…GEVY and AKIC…AIVK. N-linked (GlcNAc...) asparagine glycosylation is found at Asn198, Asn227, Asn304, Asn310, Asn402, Asn499, Asn530, Asn541, Asn572, Asn578, Asn625, Asn639, Asn692, Asn732, Asn741, Asn1035, Asn1043, Asn1081, Asn1128, Asn1208, Asn1241, and Asn1258.

This sequence belongs to the transferrin family. As to expression, synthesized in the intestines of the females and males and also in ovaries and testis.

It is found in the secreted. Its function is as follows. May serve the following two functions: a classical role as a yolk protein precursor and probably shuttle iron to developing germ cells. This Strongylocentrotus purpuratus (Purple sea urchin) protein is Major yolk protein.